A 61-amino-acid chain; its full sequence is Small ribosomal subunit protein uS14 (61 aa).

Residues cysteine 24, cysteine 27, cysteine 40, and cysteine 43 each contribute to the Zn(2+) site.

The protein belongs to the universal ribosomal protein uS14 family. Zinc-binding uS14 subfamily. In terms of assembly, part of the 30S ribosomal subunit. Contacts proteins S3 and S10. It depends on Zn(2+) as a cofactor.

Binds 16S rRNA, required for the assembly of 30S particles and may also be responsible for determining the conformation of the 16S rRNA at the A site. The chain is Small ribosomal subunit protein uS14 from Clostridium botulinum (strain 657 / Type Ba4).